A 155-amino-acid polypeptide reads, in one-letter code: Endoribonuclease YbeY (155 aa).

Zn(2+)-binding residues include H114, H118, and H124.

This sequence belongs to the endoribonuclease YbeY family. Zn(2+) is required as a cofactor.

Its subcellular location is the cytoplasm. In terms of biological role, single strand-specific metallo-endoribonuclease involved in late-stage 70S ribosome quality control and in maturation of the 3' terminus of the 16S rRNA. This chain is Endoribonuclease YbeY, found in Escherichia coli O6:K15:H31 (strain 536 / UPEC).